Reading from the N-terminus, the 318-residue chain is Death effector domain-containing protein (318 aa).

The DED domain maps to 25-103; the sequence is SLHRMFDIVG…RHDLLPYVTL (79 aa). Disordered stretches follow at residues 128-147 and 160-191; these read PRALSDPEPRPPQPSKTVPP and QMCSKRPARGRATLGSQRKRRKSVTPDPKEKQ.

As to quaternary structure, interacts with CASP8, CASP10, KRT8, KRT18, CASP3 and FADD. Homodimerizes and heterodimerizes with DEDD2. Post-translationally, exists predominantly in a mono- or diubiquitinated form. As to expression, widely expressed with highest levels in testis.

The protein localises to the cytoplasm. Its subcellular location is the nucleus. It is found in the nucleolus. A scaffold protein that directs CASP3 to certain substrates and facilitates their ordered degradation during apoptosis. May also play a role in mediating CASP3 cleavage of KRT18. Regulates degradation of intermediate filaments during apoptosis. May play a role in the general transcription machinery in the nucleus and might be an important regulator of the activity of GTF3C3. Inhibits DNA transcription in vitro. The chain is Death effector domain-containing protein (DEDD) from Homo sapiens (Human).